The primary structure comprises 231 residues: uncharacterized protein (231 aa).

Residue 10–34 coordinates NADP(+); the sequence is VVTGAGSGIGEAIATLLHEEGAKVV. Ser-140 serves as a coordination point for substrate. Catalysis depends on Tyr-153, which acts as the Proton acceptor.

Belongs to the short-chain dehydrogenases/reductases (SDR) family.

This is an uncharacterized protein from Staphylococcus aureus (strain N315).